The primary structure comprises 262 residues: Glucosamine-6-phosphate deaminase (262 aa).

Asp63 functions as the Proton acceptor; for enolization step in the catalytic mechanism. Asn129 functions as the For ring-opening step in the catalytic mechanism. His131 serves as the catalytic Proton acceptor; for ring-opening step. Glu136 (for ring-opening step) is an active-site residue.

Belongs to the glucosamine/galactosamine-6-phosphate isomerase family. NagB subfamily.

It catalyses the reaction alpha-D-glucosamine 6-phosphate + H2O = beta-D-fructose 6-phosphate + NH4(+). Its pathway is amino-sugar metabolism; N-acetylneuraminate degradation; D-fructose 6-phosphate from N-acetylneuraminate: step 5/5. Catalyzes the reversible isomerization-deamination of glucosamine 6-phosphate (GlcN6P) to form fructose 6-phosphate (Fru6P) and ammonium ion. This is Glucosamine-6-phosphate deaminase from Bacillus cereus (strain ZK / E33L).